We begin with the raw amino-acid sequence, 583 residues long: MLO-like protein 6 (583 aa).

The Extracellular segment spans residues 1–15; that stretch reads MADQVKEKTLEETST. A helical membrane pass occupies residues 16–36; it reads WAVAVVCFVLLLISIVIEKLI. Over 37-61 the chain is Cytoplasmic; that stretch reads HKIGSWFKKKNKKALYEALEKVKAE. Residues 62–82 traverse the membrane as a helical segment; it reads LMLMGFISLLLTIGQGYISNI. The Extracellular segment spans residues 83-161; sequence CIPKNIAASM…VSAYGMHQLH (79 aa). The helical transmembrane segment at 162 to 182 threads the bilayer; the sequence is IFIFVLAVCHVIYCIVTYALG. The Cytoplasmic segment spans residues 183–284; sequence KTKMRRWKKW…KYIQRSLEED (102 aa). Residues 285 to 305 form a helical membrane-spanning segment; it reads FKTIVEINPVIWFIAVLFLLT. Topologically, residues 306-314 are extracellular; it reads NTNGLNSYL. A helical transmembrane segment spans residues 315–335; the sequence is WLPFIPFIVILIVGTKLQVII. Residues 336-368 lie on the Cytoplasmic side of the membrane; it reads TKLGLRIQEKGDVVKGTPLVQPGDHFFWFGRPR. Residues 369–389 traverse the membrane as a helical segment; that stretch reads FILFLIHLVLFTNAFQLAFFV. Residues 390–411 lie on the Extracellular side of the membrane; the sequence is WSTYEFGLKNCFHESRVDVIIR. A helical membrane pass occupies residues 412-432; sequence ISIGLLVQILCSYVTLPLYAL. Residues 433-583 are Cytoplasmic-facing; sequence VTQMGSKMKP…ISLRDFSFKR (151 aa). The tract at residues 447 to 468 is calmodulin-binding; the sequence is ERVATALKSWHHTAKKNIKHGR. A disordered region spans residues 461–583; it reads KKNIKHGRTS…ISLRDFSFKR (123 aa). The span at 470-484 shows a compositional bias: low complexity; the sequence is SESTTPFSSRPTTPT. The segment covering 541–551 has biased composition (basic and acidic residues); sequence RFGEEESEKKF.

The protein belongs to the MLO family.

The protein resides in the membrane. Functionally, may be involved in modulation of pathogen defense and leaf cell death. Activity seems to be regulated by Ca(2+)-dependent calmodulin binding and seems not to require heterotrimeric G proteins. This Arabidopsis thaliana (Mouse-ear cress) protein is MLO-like protein 6 (MLO6).